Reading from the N-terminus, the 48-residue chain is Large ribosomal subunit protein bL32 (48 aa).

The disordered stretch occupies residues 24-48 (LPMPIKDKDGSYKMPHRVNPVTKEY).

This sequence belongs to the bacterial ribosomal protein bL32 family.

In Campylobacter lari (strain RM2100 / D67 / ATCC BAA-1060), this protein is Large ribosomal subunit protein bL32.